Here is a 62-residue protein sequence, read N- to C-terminus: DNA-directed RNA polymerase subunit omega (62 aa).

It belongs to the RNA polymerase subunit omega family. The RNAP catalytic core consists of 2 alpha, 1 beta, 1 beta' and 1 omega subunit. When a sigma factor is associated with the core the holoenzyme is formed, which can initiate transcription.

It carries out the reaction RNA(n) + a ribonucleoside 5'-triphosphate = RNA(n+1) + diphosphate. Promotes RNA polymerase assembly. Latches the N- and C-terminal regions of the beta' subunit thereby facilitating its interaction with the beta and alpha subunits. In Wigglesworthia glossinidia brevipalpis, this protein is DNA-directed RNA polymerase subunit omega.